Consider the following 32-residue polypeptide: Cathepsin B-like cysteine proteinase (32 aa).

A propeptide spans Lys-1–Glu-22 (activation peptide).

Belongs to the peptidase C1 family.

Thiol protease. This chain is Cathepsin B-like cysteine proteinase, found in Fasciola hepatica (Liver fluke).